A 314-amino-acid polypeptide reads, in one-letter code: Ribosomal protein uL3 glutamine methyltransferase (314 aa).

This sequence belongs to the protein N5-glutamine methyltransferase family. PrmB subfamily.

It carries out the reaction L-glutaminyl-[ribosomal protein uL3] + S-adenosyl-L-methionine = N(5)-methyl-L-glutaminyl-[ribosomal protein uL3] + S-adenosyl-L-homocysteine + H(+). In terms of biological role, methylates large ribosomal subunit protein uL3 on a specific glutamine residue. The protein is Ribosomal protein uL3 glutamine methyltransferase of Shewanella oneidensis (strain ATCC 700550 / JCM 31522 / CIP 106686 / LMG 19005 / NCIMB 14063 / MR-1).